The sequence spans 636 residues: Topoisomerase I damage affected protein 7 (636 aa).

A compositionally biased stretch (polar residues) spans 1 to 18 (MNSNSTIGRTTLGESDTI). Disordered regions lie at residues 1–33 (MNSNSTIGRTTLGESDTISLSFSEPSSSLNSRS), 87–109 (TLVSSTDSSSSSEQDTYSSQYDP), 246–271 (NKDTTFPSSSRNTSTSFYSSSLSSTN), 299–326 (PTSSSVSSSSSKVPSNRPSSSSSSDDTT), and 339–362 (QSTTSSSIPPTTQTPSTSTISTSP). Asn4 carries an N-linked (GlcNAc...) asparagine glycan. 2 stretches are compositionally biased toward low complexity: residues 19–33 (SLSFSEPSSSLNSRS) and 87–108 (TLVSSTDSSSSSEQDTYSSQYD). N-linked (GlcNAc...) asparagine glycosylation occurs at Asn257. The helical transmembrane segment at 457–477 (IVGSVVGSVGGILICVLVVWF) threads the bilayer. N-linked (GlcNAc...) asparagine glycosylation is present at Asn492. Over residues 510–541 (QAKEASLQAQDSGSQQRNTETASANNPFSNEF) the composition is skewed to polar residues. The tract at residues 510–551 (QAKEASLQAQDSGSQQRNTETASANNPFSNEFNFKARGNPPP) is disordered. Lys512 is covalently cross-linked (Glycyl lysine isopeptide (Lys-Gly) (interchain with G-Cter in ubiquitin)). 3 N-linked (GlcNAc...) asparagine glycosylation sites follow: Asn557, Asn562, and Asn626. Ser628 is modified (phosphoserine).

The protein belongs to the TDA7 family.

It is found in the vacuole membrane. This Saccharomyces cerevisiae (strain ATCC 204508 / S288c) (Baker's yeast) protein is Topoisomerase I damage affected protein 7 (TDA7).